The primary structure comprises 94 residues: Cystatin-A3 (94 aa).

A Secondary area of contact motif is present at residues 46–50 (QLVNG).

Belongs to the cystatin family.

It localises to the cytoplasm. Intracellular thiol proteinase inhibitor. This Dictyostelium discoideum (Social amoeba) protein is Cystatin-A3 (cpiC).